The following is a 389-amino-acid chain: Sulfate adenylyltransferase (389 aa).

It belongs to the sulfate adenylyltransferase family.

It carries out the reaction sulfate + ATP + H(+) = adenosine 5'-phosphosulfate + diphosphate. The protein operates within sulfur metabolism; hydrogen sulfide biosynthesis; sulfite from sulfate: step 1/3. This is Sulfate adenylyltransferase from Deinococcus geothermalis (strain DSM 11300 / CIP 105573 / AG-3a).